A 128-amino-acid chain; its full sequence is Large ribosomal subunit protein uL22 (128 aa).

It belongs to the universal ribosomal protein uL22 family. As to quaternary structure, part of the 50S ribosomal subunit.

Functionally, this protein binds specifically to 23S rRNA; its binding is stimulated by other ribosomal proteins, e.g. L4, L17, and L20. It is important during the early stages of 50S assembly. It makes multiple contacts with different domains of the 23S rRNA in the assembled 50S subunit and ribosome. In terms of biological role, the globular domain of the protein is located near the polypeptide exit tunnel on the outside of the subunit, while an extended beta-hairpin is found that lines the wall of the exit tunnel in the center of the 70S ribosome. This Rhodopseudomonas palustris (strain HaA2) protein is Large ribosomal subunit protein uL22.